The following is a 299-amino-acid chain: HTH-type transcriptional regulator ArgP (299 aa).

Residues 4–60 form the HTH lysR-type domain; sequence LDYKLLLALDAVMQEQNFERAAQRLHITQSAISQRIKQLEQQFAEPLLIRSQPLQAT. A DNA-binding region (H-T-H motif) is located at residues 21–40; it reads FERAAQRLHITQSAISQRIK.

Belongs to the LysR transcriptional regulatory family. In terms of assembly, homodimer.

In terms of biological role, controls the transcription of genes involved in arginine and lysine metabolism. This Aeromonas salmonicida protein is HTH-type transcriptional regulator ArgP.